The sequence spans 335 residues: Ubiquinone biosynthesis protein COQ4, mitochondrial (335 aa).

The N-terminal 10 residues, 1-10 (MLRLSLLRST), are a transit peptide targeting the mitochondrion. Residues His210, Asp211, His214, and Glu226 each contribute to the Zn(2+) site.

This sequence belongs to the COQ4 family. Component of a multi-subunit COQ enzyme complex, composed of at least COQ3, COQ4, COQ5, COQ6, COQ7 and COQ9. Interacts with COQ3. It depends on Zn(2+) as a cofactor.

It is found in the mitochondrion inner membrane. The catalysed reaction is 4-hydroxy-3-methoxy-5-(all-trans-hexaprenyl)benzoate + H(+) = 2-methoxy-6-(all-trans-hexaprenyl)phenol + CO2. The protein operates within cofactor biosynthesis; ubiquinone biosynthesis. Lyase that catalyzes the C1-decarboxylation of 4-hydroxy-3-methoxy-5-(all-trans-hexaprenyl)benzoic acid into 2-methoxy-6-(all-trans-hexaprenyl)phenol during ubiquinone biosynthesis. This is Ubiquinone biosynthesis protein COQ4, mitochondrial from Saccharomyces cerevisiae (strain RM11-1a) (Baker's yeast).